We begin with the raw amino-acid sequence, 278 residues long: Cyclin-C (278 aa).

One can recognise a Cyclin N-terminal domain in the interval 41 to 139 (NVIQALGEHL…ILECEFYLLE (99 aa)). A disordered region spans residues 247–278 (TILSKMPKPKPPPNSEGEQGPNGSQNSSYSQS). Positions 267 to 278 (PNGSQNSSYSQS) are enriched in polar residues. Ser-270 carries the post-translational modification Phosphoserine.

Belongs to the cyclin family. Cyclin C subfamily. Component of the Mediator complex, which is composed of MED1, MED4, MED6, MED7, MED8, MED9, MED10, MED11, MED12, MED13, MED13L, MED14, MED15, MED16, MED17, MED18, MED19, MED20, MED21, MED22, MED23, MED24, MED25, MED26, MED27, MED29, MED30, MED31, CCNC, CDK8 and CDC2L6/CDK11. The MED12, MED13, CCNC and CDK8 subunits form a distinct module termed the CDK8 module. Mediator containing the CDK8 module is less active than Mediator lacking this module in supporting transcriptional activation. Individual preparations of the Mediator complex lacking one or more distinct subunits have been variously termed ARC, CRSP, DRIP, PC2, SMCC and TRAP. The cylin/CDK pair formed by CCNC/CDK8 also associates with the large subunit of RNA polymerase II.

Its subcellular location is the nucleus. Its function is as follows. Component of the Mediator complex, a coactivator involved in regulated gene transcription of nearly all RNA polymerase II-dependent genes. Mediator functions as a bridge to convey information from gene-specific regulatory proteins to the basal RNA polymerase II transcription machinery. Mediator is recruited to promoters by direct interactions with regulatory proteins and serves as a scaffold for the assembly of a functional preinitiation complex with RNA polymerase II and the general transcription factors. Binds to and activates cyclin-dependent kinase CDK8 that phosphorylates the CTD (C-terminal domain) of the large subunit of RNA polymerase II (RNAp II), which may inhibit the formation of a transcription initiation complex. The protein is Cyclin-C (Ccnc) of Rattus norvegicus (Rat).